Here is a 153-residue protein sequence, read N- to C-terminus: Superoxide dismutase [Cu-Zn] (153 aa).

The Cu cation site is built by H45, H47, and H62. The cysteines at positions 56 and 145 are disulfide-linked. Zn(2+) contacts are provided by H62, H70, H79, and D82. Residue H119 coordinates Cu cation.

The protein belongs to the Cu-Zn superoxide dismutase family. As to quaternary structure, homodimer. Cu cation serves as cofactor. Requires Zn(2+) as cofactor.

The protein localises to the cytoplasm. The enzyme catalyses 2 superoxide + 2 H(+) = H2O2 + O2. In terms of biological role, destroys radicals which are normally produced within the cells and which are toxic to biological systems. This Drosophila erecta (Fruit fly) protein is Superoxide dismutase [Cu-Zn].